The chain runs to 1052 residues: Membrane-bound transcription factor site-1 protease (1052 aa).

The first 17 residues, 1–17, serve as a signal peptide directing secretion; the sequence is MKLINIWLLLLVVLLCG. Positions 18–186 are excised as a propeptide; it reads KKHLGDRLGK…TGRHSSRRLL (169 aa). Asparagine 148 carries an N-linked (GlcNAc...) asparagine glycan. Serine 168 carries the phosphoserine modification. Residues 187-999 are Lumenal-facing; it reads RAIPRQVAQT…MPGRYNQEVG (813 aa). A Peptidase S8 domain is found at 190-472; the sequence is PRQVAQTLQA…HGKLDLLRAY (283 aa). Residue aspartate 218 is the Charge relay system of the active site. The N-linked (GlcNAc...) asparagine glycan is linked to asparagine 236. The active-site Charge relay system is the histidine 249. N-linked (GlcNAc...) asparagine glycosylation is present at asparagine 305. Residue serine 414 is the Charge relay system of the active site. 2 N-linked (GlcNAc...) asparagine glycosylation sites follow: asparagine 515 and asparagine 728. Over residues 877-887 the composition is skewed to polar residues; sequence PSLSHSGNRQR. Positions 877-900 are disordered; that stretch reads PSLSHSGNRQRPPSGAGLAPPERM. N-linked (GlcNAc...) asparagine glycosylation occurs at asparagine 939. A helical transmembrane segment spans residues 1000 to 1022; that stretch reads QTIPVFAFLGAMVALAFFVVQIS. Over 1023 to 1052 the chain is Cytoplasmic; it reads KAKSRPKRRRPRAKRPQLTQQTHPPRTPSV. The segment covering 1025 to 1037 has biased composition (basic residues); the sequence is KSRPKRRRPRAKR. The interval 1025–1052 is disordered; sequence KSRPKRRRPRAKRPQLTQQTHPPRTPSV.

The protein belongs to the peptidase S8 family. It depends on Ca(2+) as a cofactor. The 148 kDa zymogen is processed progressively into two membrane-bound 120 and 106 kDa forms in the endoplasmic reticulum, and late into a secreted 98 kDa form. The propeptide is autocatalytically removed through an intramolecular cleavage after Leu-186. Further cleavage generates 14, 10, and 8 kDa intermediates.

It is found in the endoplasmic reticulum membrane. The protein resides in the golgi apparatus membrane. It catalyses the reaction Processes precursors containing basic and hydrophobic/aliphatic residues at P4 and P2, respectively, with a relatively relaxed acceptance of amino acids at P1 and P3.. Its activity is regulated as follows. Inhibited by divalent copper and zinc ions, but not by nickel or cobalt. Inhibited by its prosegment, but not smaller fragments. Inhibited by 4-(2-aminoethyl)benzenesulfonyl fluoride (AEBSF), a serine protease inhibitor. Functionally, serine protease that cleaves after hydrophobic or small residues, provided that Arg or Lys is in position P4: known substrates include SREBF1/SREBP1, SREBF2/SREBP2, BDNF, GNPTAB, ATF6, ATF6B and FAM20C. Cleaves substrates after Arg-Ser-Val-Leu (SREBP2), Arg-His-Leu-Leu (ATF6), Arg-Gly-Leu-Thr (BDNF) and its own propeptide after Arg-Arg-Leu-Leu. Catalyzes the first step in the proteolytic activation of the sterol regulatory element-binding proteins (SREBPs) SREBF1/SREBP1 and SREBF2/SREBP2. Also mediates the first step in the proteolytic activation of the cyclic AMP-dependent transcription factor ATF-6 (ATF6 and ATF6B). Mediates the protein cleavage of GNPTAB into subunit alpha and beta, thereby participating in biogenesis of lysosomes. Cleaves the propeptide from FAM20C which is required for FAM20C secretion from the Golgi apparatus membrane and for enhancement of FAM20C kinase activity, promoting osteoblast differentiation and biomineralization. Involved in the regulation of M6P-dependent Golgi-to-lysosome trafficking of lysosomal enzymes. It is required for the activation of CREB3L2/BBF2H7, a transcriptional activator of MIA3/TANGO and other genes controlling mega vesicle formation. Therefore, it plays a key role in the regulation of mega vesicle-mediated collagen trafficking. In astrocytes and osteoblasts, upon DNA damage and ER stress, mediates the first step of the regulated intramembrane proteolytic activation of the transcription factor CREB3L1, leading to the inhibition of cell-cycle progression. This chain is Membrane-bound transcription factor site-1 protease, found in Cricetulus griseus (Chinese hamster).